Consider the following 604-residue polypeptide: Elongation factor 4 (604 aa).

In terms of domain architecture, tr-type G spans 7 to 190 (SRLRNFCIIA…IVDRVPAPPD (184 aa)). GTP-binding positions include 19-24 (DHGKST) and 136-139 (NKID).

Belongs to the TRAFAC class translation factor GTPase superfamily. Classic translation factor GTPase family. LepA subfamily.

The protein localises to the cell inner membrane. It carries out the reaction GTP + H2O = GDP + phosphate + H(+). In terms of biological role, required for accurate and efficient protein synthesis under certain stress conditions. May act as a fidelity factor of the translation reaction, by catalyzing a one-codon backward translocation of tRNAs on improperly translocated ribosomes. Back-translocation proceeds from a post-translocation (POST) complex to a pre-translocation (PRE) complex, thus giving elongation factor G a second chance to translocate the tRNAs correctly. Binds to ribosomes in a GTP-dependent manner. The sequence is that of Elongation factor 4 from Synechococcus sp. (strain RCC307).